Consider the following 973-residue polypeptide: Probable outer membrane protein pmp13 (973 aa).

Residues 1 to 24 (MKTSIRKFLISTTLAPCFASTAFT) form the signal peptide. Polar residues predominate over residues 284–293 (QNNTASPQNS). The interval 284-303 (QNNTASPQNSLPAPTPPPTP) is disordered. In terms of domain architecture, Autotransporter spans 691–973 (EDVPGKQLSI…TLDIGSKLRF (283 aa)).

The protein belongs to the PMP outer membrane protein family.

The protein resides in the secreted. It is found in the cell wall. The protein localises to the cell outer membrane. The protein is Probable outer membrane protein pmp13 (pmp13) of Chlamydia pneumoniae (Chlamydophila pneumoniae).